The primary structure comprises 159 residues: MKVKLICVGKLKERYLKDGISEYQKRLSRFCQFEMIELTDERTPDKASFADNQLIMSKEAQRIHKKIGERDFVIALAIEGKQFPSETFSELISGVTVKGYSTITFIIGGSLGLDSIIKKRANMLMSFGLLTLPHQLMRLVLTEQIYRAFMITQGSPYHK.

S-adenosyl-L-methionine is bound by residues L76, G108, and 127–132 (FGLLTL).

This sequence belongs to the RNA methyltransferase RlmH family. Homodimer.

Its subcellular location is the cytoplasm. The enzyme catalyses pseudouridine(1915) in 23S rRNA + S-adenosyl-L-methionine = N(3)-methylpseudouridine(1915) in 23S rRNA + S-adenosyl-L-homocysteine + H(+). Its function is as follows. Specifically methylates the pseudouridine at position 1915 (m3Psi1915) in 23S rRNA. In Streptococcus pyogenes serotype M6 (strain ATCC BAA-946 / MGAS10394), this protein is Ribosomal RNA large subunit methyltransferase H.